The chain runs to 3491 residues: MPTRYRGADRYGNLGYDKVLQSKADAAKRRGLLFDHGSETYECPRCGEIWRNLDDYMAEGGKMHPKKCLPEECDSDEEQISSCNAALIHEKWGDLDSDTSSKLSEFYKEPSILTYTTRTHCVVEKMRSMTAPQCIEDIVGVRLHGRTAWFFSKDPTLQYGHHPIYYDTHPWNDELDKYLGGAKYNTALVQVYDGTRDLPYHKDDEPCYDITNNPIRTVNVTGTGDLCISKDKRRLYETIPMTSGTVITFPATMQENFYHAVRNPSAGRISITFRNQIRTVERQVAHSANKRWVPIVEARVTTNESRRGDNKQFQEAQSKLQTKTTINFGEFAAEVDGYYPTLSQDHKPALPKIIPELGLPTVDFIYVGNMRVPIDFKKNNVPAIVDTARHVAKIIDSQALTSEPIKVFTEQREVVGNVVTCTGTGFSVADAKEAKALLNGLMYNRASNLFICPSCSDAAVLPEALLTLEHKRSCELASMKKISLARNMQVHVKQEAVARLISQQNSISVPIATLSSCVRGSADTTQVSLHIDEEDSIVDAIHLPNDFITCDHEHAFETDSASDNDVETMKKSEKRRKRRKRNPPPVRQVITRAPVSNIICDVILTCLETQIPVEFIGKSCITFKPVRVGPVHTVGIQLKHQLHKTGFEVDDLPDRETTSDIILAATRALRRLRHAHSNAQQVHNSDITFGTSGAILPWSWLAHDVIVEGPVQDSLVVRGRNVVSGHVTNALNLQQDCLADDYLQYSEELQPLHDDLSELKPLNVINNELIRQNMHITTLYSNMSKLQNDALATKAEMKLPLFGVAQLVVNQLKYNTTTHEWGERGDYVRKFVGKFFADFPTTQVPKQYMTRTTNGHIRITAYKALSLTSDPEIMMSRRMTQPMLTTAKQADCVFQSTTGATCTSASCTTNSSGVVLSNKCADPAPNTLRVRTMWDDIIIELPLQGGRVHVPLEGLCFSTIFLHMYLLVPDESVKLFHRTVTERAMPSLGQWPTLRHLATWVLNLVAMFPVLSTTPMPEILVHHESQSVHIPDCLGTATSGYHRLNIVTPYDFIIFATEIGRNGCQEYRVGGFAHDIKYTVSLMQDKRKLLHELMLTPTWAFYALSSPTLLKILYRSGALKRTYEHAVMANHNAVDLVHELNFLPERVSRAQTLQDEITAWEANVGRVLQQVDGYLTRNHDPPLQRWYADASARLQHLKIDVDLLKNGFRSSQREHVEKKEQLLCDSFERLYNEQNSSLESLKTRCGMGSARALIKPSGKCESPEPAKQLSCKDLICSTKDKYALMLYTQADALKRKIVAGSQSAFTTVCAGVAYRATKVMLRTPFNLLNALNTYSLLIAAVNVMVLVQNYRRDQRKRAQYVNNLETQSMIRHYFAHLEQYIVNYVPRDEQFEVIKAKFDEEFPEYNVMFKEVYKERIQFQSADEGKNMCKIFASAILVMMVFDAHRADLMYKSFSQVRALFNTLYDSGNPFNIIFQAERTIAPTMDVIIQEPKPAIPSTSSCTFETWFRNCVNANNVIPVIPECDLLDFTRDTASSVVATLTSSVKREFVIRGFVGSGKSTYLPHLLTKHGKVLLCEPVRVLASNVFEALSGSPFYQSPTLLMRGTTKFGSGKITVATSGYAANYYNANRHRLNEFAYIIFDESHQHTAHNFLLRSILDVIGYEGTVLHVSATPIGKEIPFRTMHPVEVVNMSTLSFEDFAIGQRKQVRCDVFNKGANILVYVASYNDVDRMSTLLLERGLRVKKIDARTVANVNNITCDGSDGEPLYLVATNIVENGVTLNVDVVVDFGLCVKPVINALQRRVDYVKTPITWGQRIQRNGRVGRYKNGFCLNVGDVYKTPPIISEDVALESALMCFAANVPPIFDNVDPALFGQVTRPQVQTAQMFELPIYITTPMISDAGALQSDIYQVIKKFVLREGSIQLTQDATYLSNMSNWKTIADYFPDISDTHAMRHEKVPFFVKDFGENSYIALAEAIRKARNKSLGARGKLYGDVDATALLLQTDPGSLDRSIMIVETELVAQRSKLEDLNHHVHESTGMFQRYVSHLNHCLRGRYQTDQIQKNIEVLSNMRSTLVGYRQVVDKVEPEEIPHFVQQNPNITMIIDFQSDRTKADGFVKHGINGIYNYTKIASDTFSLLLIACVVIYYVVQYFFREMKSHITFEASGSRRNRLHLRDNKLIKGGYTWAGPSDDMEREFGPEYALKRDKFSEKKARKHMRERIQPRTNMGVKLAPFQVFYGFDVADYDVLQLFDPITGVKIDMDPRATAKEITEEVEDTPFNKEVWSDTHMPEKIQATFVKKGGVNREDVLKQVRVDMTTHNPTMVTGSGGIMGYPEHKGDFRQTGPPKFSIVPEGRSTIKSGNNIAPFISAMGTIKNVYMNGDFDTLACTQIGNKLVVNAHIFMEPVKKQELILQHGVYELPNNGTINIKHVPGIDMVIQTLPMDVPLARQIKAYRGPIPGELIRLLKIERNTKTNSTSLSDPGTARVGPGTIWYHNITTKHGDCGSLVLSEKDNKIVGIHTGQQDGTNLNLFAPITKDAIVAIETVLPGELNDWVFTPDMLDVGSNNAIRKQASDPFPVVKKLLEGITFQNNRTTTTDSVSNTAILPARKYWVASDLPVNIKYQCDMPTFFNTRHTYEGESQPFMAYLRECGDAETFFRPLLSHYIPSNLNGDAFKKDFFKYGKPVPVGLVHGPSFKIASDRVIKRFERVGYERHSIPFEFDAEAIRDDLNKHAAMGAQYVGKKEQHLDGISEEQFCDEFVASCCRLANNCDGVWKGSLKAELRSKEKVQENKTRVFTSAPYDVLLGGKACVMHFNKKFYANNTKGPWTVGINKLGLGWHRLLKSLPEGFVYGTGDGSQFDSSLTPLLINEVCRIRMYFMQDDELGQAMLRGLYRQIIWTLISMPDGSVVRKAKGNPSGQPSTVDDNTIMVMLAVEYVFAYLGITQEEMDTIFKYYANGDDLIFAIHPDRESILNEFTHLFAHLGLNYIFEDRTRNRAELEYMSLTGIEREGFYIPKLSRERISSIVQWRRKGDTRAMFDALNAAILESWGYDDLTYWLRKYYEWLIINRYDIDLPEGEKLPYHTETAVETLYTCDDNTTVYDGRYDFEVPTDASGGVFIIDFQSSSGTDTPPVIPPATSEPALQPVLTRQTSRPPTPPNTILTGQQQQQLMPKSSQPYQLEPLLAPTGVQQPTFGTFGMPQAQQTTTEPVVAAARVRGKQKEGDTSLSQVRDHRRLSPERIVRHDDDLAPPNESTSGESSHYDELTLPDVPRDKRKGLGARLKGKPIITQTQIYNYRPAFGSIHNNKATDIELEAWKKQIADYFQVDDVSTLILGFMAYVIENGTSPEIFTNQKFVMATSSGEQREYPLAPFRSRSVELRKIMRRFSEEAIDYIQIQREHNPQYVPRQAVVRNVKRAIYFPYCFDFIDETILTPDALEIVHQMKAAALESASSKVLGLDGGSARAIDTERHTTEDATARTHNLRGAAMMA.

The region spanning 183 to 277 is the Fe2OG dioxygenase domain; it reads KYNTALVQVY…RISITFRNQI (95 aa). The Fe cation site is built by His201, Asp203, and His259. Arg268 contacts 2-oxoglutarate. The tract at residues 559–588 is disordered; sequence DSASDNDVETMKKSEKRRKRRKRNPPPVRQ. Residues 572–582 show a composition bias toward basic residues; the sequence is SEKRRKRRKRN. The region spanning 589 to 745 is the Peptidase S30 domain; it reads VITRAPVSNI…DCLADDYLQY (157 aa). Residues His640, Asp651, and Ser692 each act as for P1 proteinase activity in the active site. Positions 948 to 1070 constitute a Peptidase C6 domain; sequence VHVPLEGLCF…RNGCQEYRVG (123 aa). Catalysis depends on for helper component proteinase activity residues Cys956 and His1029. Positions 1540–1692 constitute a Helicase ATP-binding domain; the sequence is TLTSSVKREF…TMHPVEVVNM (153 aa). 1553–1560 provides a ligand contact to ATP; the sequence is GFVGSGKS. Residues 1642–1645 carry the DEAH box motif; sequence DESH. The 174-residue stretch at 1696–1869 folds into the Helicase C-terminal domain; it reads SFEDFAIGQR…NVPPIFDNVD (174 aa). Position 2238 is an O-(5'-phospho-RNA)-tyrosine (Tyr2238). The Peptidase C4 domain maps to 2354–2570; the sequence is GRSTIKSGNN…LDVGSNNAIR (217 aa). Catalysis depends on for nuclear inclusion protein A activity residues His2400, Asp2435, and Cys2504. The RdRp catalytic domain maps to 2850 to 2974; the sequence is FVYGTGDGSQ…AIHPDRESIL (125 aa). Disordered stretches follow at residues 3200–3279 and 3471–3491; these read MPQA…RKGL and RHTT…AMMA. Residues 3236–3248 show a composition bias toward basic and acidic residues; it reads RLSPERIVRHDDD. Thr3473 is subject to Phosphothreonine.

The protein belongs to the potyviridae genome polyprotein family. It depends on Fe(2+) as a cofactor. In terms of processing, VPg is uridylylated by the polymerase and is covalently attached to the 5'-end of the genomic RNA. This uridylylated form acts as a nucleotide-peptide primer for the polymerase. Post-translationally, genome polyprotein of potyviruses undergoes post-translational proteolytic processing by the main proteinase NIa-pro resulting in the production of at least ten individual proteins. The P1 proteinase and the HC-pro cleave only their respective C-termini autocatalytically. 6K1 is essential for proper proteolytic separation of P3 from CI.

It is found in the host cytoplasmic vesicle. It localises to the virion. The catalysed reaction is RNA(n) + a ribonucleoside 5'-triphosphate = RNA(n+1) + diphosphate. The enzyme catalyses Hydrolyzes glutaminyl bonds, and activity is further restricted by preferences for the amino acids in P6 - P1' that vary with the species of potyvirus, e.g. Glu-Xaa-Xaa-Tyr-Xaa-Gln-|-(Ser or Gly) for the enzyme from tobacco etch virus. The natural substrate is the viral polyprotein, but other proteins and oligopeptides containing the appropriate consensus sequence are also cleaved.. It carries out the reaction Hydrolyzes a Gly-|-Gly bond at its own C-terminus, commonly in the sequence -Tyr-Xaa-Val-Gly-|-Gly, in the processing of the potyviral polyprotein.. Its function is as follows. Required for aphid transmission and also has proteolytic activity. Only cleaves a Gly-Gly dipeptide at its own C-terminus. Interacts with virions and aphid stylets. Acts as a suppressor of RNA-mediated gene silencing, also known as post-transcriptional gene silencing (PTGS), a mechanism of plant viral defense that limits the accumulation of viral RNAs. May have RNA-binding activity. In terms of biological role, has helicase activity. It may be involved in replication. Functionally, indispensable for virus replication. Reduces the abundance of host transcripts related to jasmonic acid biosynthesis therefore altering the host defenses. In order to increase its own stability, decreases host protein degradation pathways. Indispensable for virus replication. Its function is as follows. Mediates the cap-independent, EIF4E-dependent translation of viral genomic RNAs. Binds to the cap-binding site of host EIF4E and thus interferes with the host EIF4E-dependent mRNA export and translation. VPg-RNA directly binds EIF4E and is a template for transcription. Also forms trimeric complexes with EIF4E-EIF4G, which are templates for translation. In terms of biological role, has RNA-binding and proteolytic activities. Functionally, an RNA-dependent RNA polymerase that plays an essential role in the virus replication. Involved in aphid transmission, cell-to-cell and systemis movement, encapsidation of the viral RNA and in the regulation of viral RNA amplification. The polypeptide is Genome polyprotein (Blackberry virus Y (isolate Blackberry plant/USA:Arkansas/C3ARK/2005) (BVY)).